The primary structure comprises 37 residues: Esculentin-2Rb (37 aa).

C31 and C37 are oxidised to a cystine.

As to expression, expressed by the skin glands.

The protein resides in the secreted. Its function is as follows. Antimicrobial peptide. The polypeptide is Esculentin-2Rb (Pelophylax ridibundus (Marsh frog)).